Here is a 189-residue protein sequence, read N- to C-terminus: Elongation factor P (189 aa).

It belongs to the elongation factor P family.

The protein resides in the cytoplasm. It functions in the pathway protein biosynthesis; polypeptide chain elongation. Functionally, involved in peptide bond synthesis. Stimulates efficient translation and peptide-bond synthesis on native or reconstituted 70S ribosomes in vitro. Probably functions indirectly by altering the affinity of the ribosome for aminoacyl-tRNA, thus increasing their reactivity as acceptors for peptidyl transferase. This chain is Elongation factor P, found in Orientia tsutsugamushi (strain Ikeda) (Rickettsia tsutsugamushi).